A 122-amino-acid polypeptide reads, in one-letter code: Large ribosomal subunit protein uL14 (122 aa).

The protein belongs to the universal ribosomal protein uL14 family. As to quaternary structure, part of the 50S ribosomal subunit. Forms a cluster with proteins L3 and L19. In the 70S ribosome, L14 and L19 interact and together make contacts with the 16S rRNA in bridges B5 and B8.

Its function is as follows. Binds to 23S rRNA. Forms part of two intersubunit bridges in the 70S ribosome. This is Large ribosomal subunit protein uL14 from Jannaschia sp. (strain CCS1).